A 336-amino-acid chain; its full sequence is Ketol-acid reductoisomerase (NADP(+)) (336 aa).

The region spanning methionine 1 to threonine 182 is the KARI N-terminal Rossmann domain. NADP(+)-binding positions include tyrosine 25–glutamine 28, arginine 48, serine 51, serine 53, and aspartate 83–glutamine 86. Histidine 108 is an active-site residue. Glycine 134 contributes to the NADP(+) binding site. One can recognise a KARI C-terminal knotted domain in the interval threonine 183–leucine 328. Residues aspartate 191, glutamate 195, glutamate 227, and glutamate 231 each coordinate Mg(2+). Position 252 (serine 252) interacts with substrate.

Belongs to the ketol-acid reductoisomerase family. Mg(2+) serves as cofactor.

It carries out the reaction (2R)-2,3-dihydroxy-3-methylbutanoate + NADP(+) = (2S)-2-acetolactate + NADPH + H(+). The enzyme catalyses (2R,3R)-2,3-dihydroxy-3-methylpentanoate + NADP(+) = (S)-2-ethyl-2-hydroxy-3-oxobutanoate + NADPH + H(+). Its pathway is amino-acid biosynthesis; L-isoleucine biosynthesis; L-isoleucine from 2-oxobutanoate: step 2/4. It participates in amino-acid biosynthesis; L-valine biosynthesis; L-valine from pyruvate: step 2/4. Its function is as follows. Involved in the biosynthesis of branched-chain amino acids (BCAA). Catalyzes an alkyl-migration followed by a ketol-acid reduction of (S)-2-acetolactate (S2AL) to yield (R)-2,3-dihydroxy-isovalerate. In the isomerase reaction, S2AL is rearranged via a Mg-dependent methyl migration to produce 3-hydroxy-3-methyl-2-ketobutyrate (HMKB). In the reductase reaction, this 2-ketoacid undergoes a metal-dependent reduction by NADPH to yield (R)-2,3-dihydroxy-isovalerate. The sequence is that of Ketol-acid reductoisomerase (NADP(+)) from Thermotoga maritima (strain ATCC 43589 / DSM 3109 / JCM 10099 / NBRC 100826 / MSB8).